Consider the following 382-residue polypeptide: Diphosphomevalonate decarboxylase ERG19 (382 aa).

Residues 22–25, arginine 78, 157–162, and threonine 213 each bind (R)-5-diphosphomevalonate; these read YWGK and SGSACR.

It belongs to the diphosphomevalonate decarboxylase family. As to quaternary structure, homodimer.

The enzyme catalyses (R)-5-diphosphomevalonate + ATP = isopentenyl diphosphate + ADP + phosphate + CO2. The protein operates within isoprenoid biosynthesis; isopentenyl diphosphate biosynthesis via mevalonate pathway; isopentenyl diphosphate from (R)-mevalonate: step 3/3. Functionally, diphosphomevalonate decarboxylase; part of the second module of ergosterol biosynthesis pathway that includes the middle steps of the pathway. MVD1 converts diphosphomevalonate into isopentenyl diphosphate. The second module is carried out in the vacuole and involves the formation of farnesyl diphosphate, which is also an important intermediate in the biosynthesis of ubiquinone, dolichol, heme and prenylated proteins. Activity by the mevalonate kinase ERG12 (FG05912) first converts mevalonate into 5-phosphomevalonate. 5-phosphomevalonate is then further converted to 5-diphosphomevalonate by the phosphomevalonate kinase ERG8 (FG09764). The diphosphomevalonate decarboxylase ERG19 (FG10424) then produces isopentenyl diphosphate. The isopentenyl-diphosphate delta-isomerase IDI1 (FG09722) then catalyzes the 1,3-allylic rearrangement of the homoallylic substrate isopentenyl (IPP) to its highly electrophilic allylic isomer, dimethylallyl diphosphate (DMAPP). Finally the farnesyl diphosphate synthase ERG20 (FG06784) catalyzes the sequential condensation of isopentenyl pyrophosphate with dimethylallyl pyrophosphate, and then with the resultant geranylpyrophosphate to the ultimate product farnesyl pyrophosphate. The protein is Diphosphomevalonate decarboxylase ERG19 of Gibberella zeae (strain ATCC MYA-4620 / CBS 123657 / FGSC 9075 / NRRL 31084 / PH-1) (Wheat head blight fungus).